A 232-amino-acid chain; its full sequence is tRNA (guanine-N(7)-)-methyltransferase (232 aa).

Residues E38, D63, E90, and D113 each coordinate S-adenosyl-L-methionine. D113 is a catalytic residue. 2 residues coordinate substrate: K117 and D149.

The protein belongs to the class I-like SAM-binding methyltransferase superfamily. TrmB family.

It catalyses the reaction guanosine(46) in tRNA + S-adenosyl-L-methionine = N(7)-methylguanosine(46) in tRNA + S-adenosyl-L-homocysteine. The protein operates within tRNA modification; N(7)-methylguanine-tRNA biosynthesis. Its function is as follows. Catalyzes the formation of N(7)-methylguanine at position 46 (m7G46) in tRNA. The polypeptide is tRNA (guanine-N(7)-)-methyltransferase (Syntrophotalea carbinolica (strain DSM 2380 / NBRC 103641 / GraBd1) (Pelobacter carbinolicus)).